Here is a 173-residue protein sequence, read N- to C-terminus: NADH-ubiquinone oxidoreductase chain 6 (173 aa).

A run of 5 helical transmembrane segments spans residues 1-21, 27-47, 48-68, 87-107, and 139-159; these read MTYFMLFLGLCFVLGGLAVAS, YGVVGLVLASVVGCGWLLSLG, VSFVSLVLFMVYLGGMLVVFV, VVGYGVSFIVVLAAGAVVGGL, and CGVGMFLVAGWGLLLTLFVVL.

Belongs to the complex I subunit 6 family.

It localises to the mitochondrion membrane. The catalysed reaction is a ubiquinone + NADH + 5 H(+)(in) = a ubiquinol + NAD(+) + 4 H(+)(out). Its function is as follows. Core subunit of the mitochondrial membrane respiratory chain NADH dehydrogenase (Complex I) that is believed to belong to the minimal assembly required for catalysis. Complex I functions in the transfer of electrons from NADH to the respiratory chain. The immediate electron acceptor for the enzyme is believed to be ubiquinone. This chain is NADH-ubiquinone oxidoreductase chain 6 (MT-ND6), found in Synthliboramphus wumizusume (Japanese murrelet).